The following is a 457-amino-acid chain: Ribosome biogenesis protein YTM1 (457 aa).

A ubiquitin-like (UBL) domain region spans residues 8–89; it reads VKVKFFTREK…ETTLTVEYTR (82 aa). The interval 99-457 is sufficient for interaction with ERB1 and association with 66S pre-ribosomes; sequence NFNNDDWVSA…INKGDNIFKN (359 aa). WD repeat units lie at residues 101–140, 142–180, 203–241, 282–322, 324–363, 370–410, and 421–457; these read NNDD…EKQY, GHTG…GSVS, GHKA…MTAI, SHTG…CIDT, TTSY…SAKI, GHKN…PMYT, and GVND…IFKN. Residues 172–191 form a disordered region; that stretch reads TKNDDGSVSNNTGDENDEEN.

Belongs to the WD repeat WDR12/YTM1 family. Component of the NOP7 complex, composed of ERB1, NOP7 and YTM1. The complex is held together by ERB1, which interacts with NOP7 via its N-terminal domain and with YTM1 via a high-affinity interaction between the seven-bladed beta-propeller domains of the 2 proteins. The NOP7 complex associates with the 66S pre-ribosome. Interacts (via UBL domain) with MDN1 (via VWFA/MIDAS domain).

The protein resides in the nucleus. It is found in the nucleolus. Its subcellular location is the nucleoplasm. In terms of biological role, component of the NOP7 complex, which is required for maturation of the 25S and 5.8S ribosomal RNAs and formation of the 60S ribosome. This chain is Ribosome biogenesis protein YTM1, found in Candida glabrata (strain ATCC 2001 / BCRC 20586 / JCM 3761 / NBRC 0622 / NRRL Y-65 / CBS 138) (Yeast).